We begin with the raw amino-acid sequence, 126 residues long: 13 kDa ribonucleoprotein-associated protein (126 aa).

This sequence belongs to the eukaryotic ribosomal protein eL8 family. In terms of assembly, component of the U3 snoRNP particle. Binds to the C'/D and B/C motifs in U3 snoRNA. Component of the 25S U4/U6.U5 tri-snRNP particle, a subcomplex of the spliceosome. Binds to the 5' stem-loop of U4 snRNA.

It is found in the nucleus. The protein localises to the nucleolus. Functionally, common component of the spliceosome and rRNA processing machinery. In association with the spliceosomal U4/U6.U5 tri-snRNP particle, required for splicing of pre-mRNA. In association with box C/D snoRNPs, required for processing of pre-ribosomal RNA (rRNA) and site-specific 2'-O-methylation of substrate RNAs. Essential for the accumulation and stability of U4 snRNA, U6 snRNA, and box C/D snoRNAs. In Kluyveromyces lactis (strain ATCC 8585 / CBS 2359 / DSM 70799 / NBRC 1267 / NRRL Y-1140 / WM37) (Yeast), this protein is 13 kDa ribonucleoprotein-associated protein (SNU13).